A 452-amino-acid chain; its full sequence is Phosphoglucosamine mutase (452 aa).

Serine 104 serves as the catalytic Phosphoserine intermediate. Serine 104, aspartate 241, aspartate 243, and aspartate 245 together coordinate Mg(2+). Residue serine 104 is modified to Phosphoserine.

Belongs to the phosphohexose mutase family. Mg(2+) is required as a cofactor. Post-translationally, activated by phosphorylation.

The catalysed reaction is alpha-D-glucosamine 1-phosphate = D-glucosamine 6-phosphate. In terms of biological role, catalyzes the conversion of glucosamine-6-phosphate to glucosamine-1-phosphate. The chain is Phosphoglucosamine mutase from Arthrobacter sp. (strain FB24).